Reading from the N-terminus, the 62-residue chain is [Ser6, Val10, Asp11]-phyllokinin (62 aa).

The N-terminal stretch at 1 to 22 (MSFLKKSLLLVLFLGLVSFSIC) is a signal peptide. Positions 23 to 51 (EEEKRETEEEENEDDMDEESEEKKRESPD) are excised as a propeptide. A disordered region spans residues 24–62 (EEKRETEEEENEDDMDEESEEKKRESPDRPPGFSPFRVD). Residues 30–42 (EEEENEDDMDEES) show a composition bias toward acidic residues.

The protein belongs to the frog skin active peptide (FSAP) family. Bradykinin-related peptide subfamily. As to expression, expressed by the skin glands.

The protein localises to the secreted. Its function is as follows. Induces relaxation of rat smooth muscle from tail artery and contraction of that from ileum, urinary bladder and uterus. Binds to both bradykinin receptor B1 (BDKRB1) and B2 (BDKRB2). The sequence is that of [Ser6, Val10, Asp11]-phyllokinin from Agalychnis spurrelli (Gliding leaf frog).